Here is a 376-residue protein sequence, read N- to C-terminus: Putative glutamate--cysteine ligase 2-1 (376 aa).

The protein belongs to the glutamate--cysteine ligase type 2 family. YbdK subfamily.

The catalysed reaction is L-cysteine + L-glutamate + ATP = gamma-L-glutamyl-L-cysteine + ADP + phosphate + H(+). Its function is as follows. ATP-dependent carboxylate-amine ligase which exhibits weak glutamate--cysteine ligase activity. The protein is Putative glutamate--cysteine ligase 2-1 of Mycobacterium sp. (strain KMS).